The chain runs to 398 residues: ATP-dependent RNA helicase eIF4A (398 aa).

A Q motif motif is present at residues 25 to 53 (DSFDSMELKPELLRGIYAYGFERPSAIQQ). Residues 56-226 (ILPIIKGNDV…TKFMRDPVRI (171 aa)) enclose the Helicase ATP-binding domain. 69 to 76 (AQSGTGKT) is an ATP binding site. A DEAD box motif is present at residues 174-177 (DEAD). A Helicase C-terminal domain is found at 237-398 (GIKQFYIAVE…EMPMNVADLI (162 aa)).

The protein belongs to the DEAD box helicase family. eIF4A subfamily. In terms of assembly, component of the eIF4F complex, which composition varies with external and internal environmental conditions. It is composed of at least eIF4A, eIF4E and eIF4G.

The protein localises to the cytoplasm. It catalyses the reaction ATP + H2O = ADP + phosphate + H(+). Its function is as follows. ATP-dependent RNA helicase which is a subunit of the eIF4F complex involved in cap recognition and is required for mRNA binding to ribosome. In the current model of translation initiation, eIF4A unwinds RNA secondary structures in the 5'-UTR of mRNAs which is necessary to allow efficient binding of the small ribosomal subunit, and subsequent scanning for the initiator codon. This Neosartorya fischeri (strain ATCC 1020 / DSM 3700 / CBS 544.65 / FGSC A1164 / JCM 1740 / NRRL 181 / WB 181) (Aspergillus fischerianus) protein is ATP-dependent RNA helicase eIF4A (tif1).